The following is a 259-amino-acid chain: UPF0246 protein ABBFA_001173 (259 aa).

Belongs to the UPF0246 family.

The polypeptide is UPF0246 protein ABBFA_001173 (Acinetobacter baumannii (strain AB307-0294)).